Consider the following 398-residue polypeptide: Mu-type opioid receptor (398 aa).

The Extracellular portion of the chain corresponds to Met1 to Val66. N-linked (GlcNAc...) asparagine glycans are attached at residues Asn9, Asn31, Asn38, and Asn46. A helical transmembrane segment spans residues Thr67–Tyr91. Residues Val92–Asn104 lie on the Cytoplasmic side of the membrane. A helical membrane pass occupies residues Ile105 to Leu129. Over Met130–Cys140 the chain is Extracellular. A disulfide bridge connects residues Cys140 and Cys217. Residues Lys141 to Val163 form a helical membrane-spanning segment. The Cytoplasmic portion of the chain corresponds to Asp164 to Asn183. At Tyr166 the chain carries Phosphotyrosine. The chain crosses the membrane as a helical span at residues Ala184–Met205. At Ala206 to Trp228 the chain is on the extracellular side. The chain crosses the membrane as a helical span at residues Glu229–Gly253. The Cytoplasmic portion of the chain corresponds to Leu254–Arg277. A helical membrane pass occupies residues Ile278–Ala304. Topologically, residues Leu305–Thr312 are extracellular. The helical transmembrane segment at Phe313–Tyr336 threads the bilayer. Residues Asn332 to Tyr336 carry the NPxxY; plays a role in stabilizing the activated conformation of the receptor motif. At Ala337–Pro398 the chain is on the cytoplasmic side. The S-palmitoyl cysteine moiety is linked to residue Cys351. Residues Asn362–Thr383 form a disordered region. Residue Ser363 is modified to Phosphoserine. Thr370 is modified (phosphothreonine). Position 375 is a phosphoserine (Ser375). Thr394 bears the Phosphothreonine mark.

This sequence belongs to the G-protein coupled receptor 1 family. In terms of assembly, forms homooligomers and heterooligomers with other GPCRs, such as OPRD1, OPRK1, OPRL1, NPFFR2, ADRA2A, SSTR2, CNR1 and CCR5 (probably in dimeric forms). Interacts with heterotrimeric G proteins; interaction with a heterotrimeric complex containing GNAI1, GNB1 and GNG2 stabilizes the active conformation of the receptor and increases its affinity for endomorphin-2, the synthetic opioid peptide DAMGO and for morphinan agonists. Interacts with PPL; the interaction disrupts agonist-mediated G-protein activation. Interacts (via C-terminus) with DNAJB4 (via C-terminus). Interacts with calmodulin; the interaction inhibits the constitutive activity of OPRM1; it abolishes basal and attenuates agonist-stimulated G-protein coupling. Interacts with FLNA, PLD2, RANBP9 and WLS and GPM6A. Interacts with RTP4. Interacts with SYP and GNAS. Interacts with RGS9, RGS17, RGS20, RGS4, PPP1R9B and HINT1. Isoform 9 interacts with GRPR. Post-translationally, phosphorylated. Differentially phosphorylated in basal and agonist-induced conditions. Agonist-mediated phosphorylation modulates receptor internalization. Phosphorylated by GRK2 in a agonist-dependent manner. Phosphorylation at Tyr-166 requires receptor activation, is dependent on non-receptor protein tyrosine kinase Src and results in a decrease in agonist efficacy by reducing G-protein coupling efficiency. Phosphorylated on tyrosine residues; the phosphorylation is involved in agonist-induced G-protein-independent receptor down-regulation. Phosphorylation at Ser-375 is involved in G-protein-dependent but not beta-arrestin-dependent activation of the ERK pathway. Ubiquitinated. A basal ubiquitination seems not to be related to degradation. Ubiquitination is increased upon formation of OPRM1:OPRD1 oligomers leading to proteasomal degradation; the ubiquitination is diminished by RTP4.

It is found in the cell membrane. The protein localises to the cell projection. Its subcellular location is the axon. The protein resides in the perikaryon. It localises to the dendrite. It is found in the endosome. Its function is as follows. Receptor for endogenous opioids such as beta-endorphin and endomorphin. Receptor for natural and synthetic opioids including morphine, heroin, DAMGO, fentanyl, etorphine, buprenorphin and methadone. Also activated by enkephalin peptides, such as Met-enkephalin or Met-enkephalin-Arg-Phe, with higher affinity for Met-enkephalin-Arg-Phe. Agonist binding to the receptor induces coupling to an inactive GDP-bound heterotrimeric G-protein complex and subsequent exchange of GDP for GTP in the G-protein alpha subunit leading to dissociation of the G-protein complex with the free GTP-bound G-protein alpha and the G-protein beta-gamma dimer activating downstream cellular effectors. The agonist- and cell type-specific activity is predominantly coupled to pertussis toxin-sensitive G(i) and G(o) G alpha proteins, GNAI1, GNAI2, GNAI3 and GNAO1 isoforms Alpha-1 and Alpha-2, and to a lesser extent to pertussis toxin-insensitive G alpha proteins GNAZ and GNA15. They mediate an array of downstream cellular responses, including inhibition of adenylate cyclase activity and both N-type and L-type calcium channels, activation of inward rectifying potassium channels, mitogen-activated protein kinase (MAPK), phospholipase C (PLC), phosphoinositide/protein kinase (PKC), phosphoinositide 3-kinase (PI3K) and regulation of NF-kappa-B. Also couples to adenylate cyclase stimulatory G alpha proteins. The selective temporal coupling to G-proteins and subsequent signaling can be regulated by RGSZ proteins, such as RGS9, RGS17 and RGS4. Phosphorylation by members of the GPRK subfamily of Ser/Thr protein kinases and association with beta-arrestins is involved in short-term receptor desensitization. Beta-arrestins associate with the GPRK-phosphorylated receptor and uncouple it from the G-protein thus terminating signal transduction. The phosphorylated receptor is internalized through endocytosis via clathrin-coated pits which involves beta-arrestins. The activation of the ERK pathway occurs either in a G-protein-dependent or a beta-arrestin-dependent manner and is regulated by agonist-specific receptor phosphorylation. Acts as a class A G-protein coupled receptor (GPCR) which dissociates from beta-arrestin at or near the plasma membrane and undergoes rapid recycling. Receptor down-regulation pathways are varying with the agonist and occur dependent or independent of G-protein coupling. Endogenous ligands induce rapid desensitization, endocytosis and recycling. Heterooligomerization with other GPCRs can modulate agonist binding, signaling and trafficking properties. Functionally, isoform 9 is involved in morphine-induced scratching and seems to cross-activate GRPR in response to morphine. The polypeptide is Mu-type opioid receptor (Oprm1) (Mus musculus (Mouse)).